Here is a 446-residue protein sequence, read N- to C-terminus: MGRLFGTDGVRGLANEKLTAPLAMRLGAAAARVLTEKKSTDRRPTAIIGRDPRVSGEMLTAALSAGLASQGVDVLDVGVLPTPAVAFLTDDYGSDMGVMVSASHNPMPDNGIKFFAIGGRKLEDWIEDEIEQEMGKLPEEGPTGAAIGRVFDQSHSALDRYLHHLQQAVHTRLDGIKVVVDCAHGAAYQAAPMAYEAAGAEVVAVSNKPNGYNINDGVGSTHIDQLQKAVVEHGADLGLAHDGDADRCLAVDAQGNVVDGDQIMAVLALSMKDGGELKRNTLVATVMSNLGLKLAMERNGITLRQTQVGDRYVVEDLRAGDYSLGGEQSGHIVIPEHGTTGDGLLTGLFLMARMATTGKTLAELASAMQVLPQTLINVPVSNKAAIAGDARVKQAIAKAEEELGETGRVLLRPSGTEELFRVMVEAADSATARKIAGQLAAVVAEV.

Ser103 functions as the Phosphoserine intermediate in the catalytic mechanism. Residues Ser103, Asp242, Asp244, and Asp246 each contribute to the Mg(2+) site. Ser103 carries the phosphoserine modification.

This sequence belongs to the phosphohexose mutase family. The cofactor is Mg(2+). Post-translationally, activated by phosphorylation.

It carries out the reaction alpha-D-glucosamine 1-phosphate = D-glucosamine 6-phosphate. Its function is as follows. Catalyzes the conversion of glucosamine-6-phosphate to glucosamine-1-phosphate. The chain is Phosphoglucosamine mutase from Corynebacterium urealyticum (strain ATCC 43042 / DSM 7109).